The following is a 411-amino-acid chain: Tyrosine--tRNA ligase (411 aa).

Y33 is an L-tyrosine binding site. The short motif at 38–47 (PTADSLHLGN) is the 'HIGH' region element. Residues Y160 and Q164 each contribute to the L-tyrosine site. The 'KMSKS' region signature appears at 222–226 (KFGKS). K225 serves as a coordination point for ATP. One can recognise an S4 RNA-binding domain in the interval 346–410 (VNLVNFLVEN…GKKKILICKV (65 aa)).

The protein belongs to the class-I aminoacyl-tRNA synthetase family. TyrS type 1 subfamily. In terms of assembly, homodimer.

It localises to the cytoplasm. It catalyses the reaction tRNA(Tyr) + L-tyrosine + ATP = L-tyrosyl-tRNA(Tyr) + AMP + diphosphate + H(+). Catalyzes the attachment of tyrosine to tRNA(Tyr) in a two-step reaction: tyrosine is first activated by ATP to form Tyr-AMP and then transferred to the acceptor end of tRNA(Tyr). In Mycoplasmopsis synoviae (strain 53) (Mycoplasma synoviae), this protein is Tyrosine--tRNA ligase.